A 440-amino-acid polypeptide reads, in one-letter code: Damage-control phosphatase ARMT1 (440 aa).

Mn(2+) contacts are provided by Asp-252 and Asn-253. Asp-252 to Asn-253 serves as a coordination point for substrate. 2 residues coordinate S-adenosyl-L-methionine: Glu-257 and Asp-290. Residue Asp-290 participates in Mn(2+) binding. Residues Asp-366–Arg-370 and Lys-403 contribute to the substrate site. Positions Arg-400–Lys-403 match the Subfamily III RTxK motif motif.

The protein belongs to the damage-control phosphatase family. Sugar phosphate phosphatase III subfamily. It depends on Mn(2+) as a cofactor. Ni(2+) is required as a cofactor. In terms of processing, automethylated.

The enzyme catalyses beta-D-fructose 1-phosphate + H2O = D-fructose + phosphate. The catalysed reaction is beta-D-fructose 6-phosphate = dihydroxyacetone + D-glyceraldehyde 3-phosphate. It catalyses the reaction L-glutamyl-[protein] + S-adenosyl-L-methionine = [protein]-L-glutamate 5-O-methyl ester + S-adenosyl-L-homocysteine. In terms of biological role, metal-dependent phosphatase that shows phosphatase activity against several substrates, including fructose-1-phosphate and fructose-6-phosphate. Its preference for fructose-1-phosphate, a strong glycating agent that causes DNA damage rather than a canonical yeast metabolite, suggests a damage-control function in hexose phosphate metabolism. Has also been shown to have O-methyltransferase activity that methylates glutamate residues of target proteins to form gamma-glutamyl methyl ester residues. Possibly methylates PCNA, suggesting it is involved in the DNA damage response. This Xenopus laevis (African clawed frog) protein is Damage-control phosphatase ARMT1.